Here is a 172-residue protein sequence, read N- to C-terminus: Adenine phosphoribosyltransferase (172 aa).

Belongs to the purine/pyrimidine phosphoribosyltransferase family. As to quaternary structure, homodimer.

Its subcellular location is the cytoplasm. It carries out the reaction AMP + diphosphate = 5-phospho-alpha-D-ribose 1-diphosphate + adenine. Its pathway is purine metabolism; AMP biosynthesis via salvage pathway; AMP from adenine: step 1/1. Its function is as follows. Catalyzes a salvage reaction resulting in the formation of AMP, that is energically less costly than de novo synthesis. The protein is Adenine phosphoribosyltransferase of Streptococcus pyogenes serotype M12 (strain MGAS9429).